Consider the following 262-residue polypeptide: MTSAIKPKAGTRPSKARIRQSFERAAPTYDDAAAIQRRICIRLAEGLPDIAPTHLLDAGCGTGYAQANLQTRFPDAHRVALDLSPGMLQRVATPCCRVAGDLEHLPLADSSLDLYWSSLAVQWCDLAVALREAHRTLRPGGVIALASLGPATFHELRHAFADVDDHRHTLAFHSPGEIRQLASLAGLAAIDIKKSTEIAHYPDFKTLLRAVKAIGANQLGDGRRTSLMSRSSFQLAESACEQLRTPAGLPLTYDVIYLYARK.

It belongs to the methyltransferase superfamily.

The enzyme catalyses malonyl-[ACP] + S-adenosyl-L-methionine = malonyl-[ACP] methyl ester + S-adenosyl-L-homocysteine. It functions in the pathway cofactor biosynthesis; biotin biosynthesis. In terms of biological role, converts the free carboxyl group of a malonyl-thioester to its methyl ester by transfer of a methyl group from S-adenosyl-L-methionine (SAM). It allows to synthesize pimeloyl-ACP via the fatty acid synthetic pathway. In Dechloromonas aromatica (strain RCB), this protein is Malonyl-[acyl-carrier protein] O-methyltransferase.